The primary structure comprises 166 residues: Large ribosomal subunit protein bL17 (166 aa).

A disordered region spans residues 122 to 166; it reads PESAPVKAKQDRSKRVRGSKKTQEGSEKAEVSASAGEAAAVTEEK. Basic and acidic residues predominate over residues 142–151; it reads KTQEGSEKAE. A compositionally biased stretch (low complexity) spans 152–166; sequence VSASAGEAAAVTEEK.

The protein belongs to the bacterial ribosomal protein bL17 family. As to quaternary structure, part of the 50S ribosomal subunit. Contacts protein L32.

This chain is Large ribosomal subunit protein bL17, found in Chlorobium phaeobacteroides (strain BS1).